Here is a 547-residue protein sequence, read N- to C-terminus: Dihydrolipoyllysine-residue acetyltransferase component of pyruvate dehydrogenase complex (547 aa).

Residues serine 2–glutamate 75 enclose the Lipoyl-binding 1 domain. Lysine 41 carries the post-translational modification N6-lipoyllysine. Residues glutamate 75–alanine 117 form a disordered region. Residues glutamate 80–alanine 117 are compositionally biased toward low complexity. The Lipoyl-binding 2 domain maps to valine 119–lysine 193. At lysine 159 the chain carries N6-lipoyllysine. Residues glutamate 202–alanine 231 are compositionally biased toward low complexity. Residues glutamate 202–histidine 248 are disordered. The 38-residue stretch at histidine 248–valine 285 folds into the Peripheral subunit-binding (PSBD) domain. Histidine 520 is a catalytic residue.

The protein belongs to the 2-oxoacid dehydrogenase family. In terms of assembly, forms a 24-polypeptide structural core with octahedral symmetry. (R)-lipoate is required as a cofactor.

The enzyme catalyses N(6)-[(R)-dihydrolipoyl]-L-lysyl-[protein] + acetyl-CoA = N(6)-[(R)-S(8)-acetyldihydrolipoyl]-L-lysyl-[protein] + CoA. Its function is as follows. The pyruvate dehydrogenase complex catalyzes the overall conversion of pyruvate to acetyl-CoA and CO(2). It contains multiple copies of three enzymatic components: pyruvate dehydrogenase (E1), dihydrolipoamide acetyltransferase (E2) and lipoamide dehydrogenase (E3). This is Dihydrolipoyllysine-residue acetyltransferase component of pyruvate dehydrogenase complex (aceF) from Pseudomonas aeruginosa (strain ATCC 15692 / DSM 22644 / CIP 104116 / JCM 14847 / LMG 12228 / 1C / PRS 101 / PAO1).